The following is a 922-amino-acid chain: ATP-dependent helicase fft3 (922 aa).

Disordered stretches follow at residues 139-177 and 198-224; these read EPKMPSYMDDEEASDSLPLSLSSQSLSSQVTNQKPAPHR and PLSSRKTYEPEADDDSNDDMYSDDDSN. Low complexity predominate over residues 153–166; that stretch reads DSLPLSLSSQSLSS. Residues 207 to 223 show a composition bias toward acidic residues; sequence PEADDDSNDDMYSDDDS. Phosphoserine is present on residues Ser213 and Ser219. Residues 399 to 567 form the Helicase ATP-binding domain; the sequence is YLLYELKLAG…ISLLAFILPH (169 aa). Position 412 to 419 (412 to 419) interacts with ATP; that stretch reads DEMGLGKT. The DEGH box signature appears at 518-521; sequence DEGH. The residue at position 617 (Ser617) is a Phosphoserine. In terms of domain architecture, Helicase C-terminal spans 765–922; it reads KLKKLLTNAV…ETVEAEDDDD (158 aa).

The protein belongs to the SNF2/RAD54 helicase family. In terms of assembly, interacts with the GDP-bound form of spi1.

Its subcellular location is the nucleus. It localises to the chromosome. The enzyme catalyses ATP + H2O = ADP + phosphate + H(+). Functionally, DNA helicase that possesses intrinsic ATP-dependent nucleosome-remodeling activity and is required for heterochromatin organization. Required for maintaining a heterochromatin chromatin structure at centromeres and subtelomeres by protecting these regions from euchromatin assembly. Enhances the nucleotide exchange activity of the pim1 guanine nucleotide exchange factor and abolishes histone-H3-mediated RanGAP inhibition. Involved in the construction of the centromeres. This is ATP-dependent helicase fft3 (fft3) from Schizosaccharomyces pombe (strain 972 / ATCC 24843) (Fission yeast).